Consider the following 114-residue polypeptide: uncharacterized protein (114 aa).

This is an uncharacterized protein from Acanthamoeba polyphaga (Amoeba).